Here is a 279-residue protein sequence, read N- to C-terminus: Large ribosomal subunit protein uL2 (279 aa).

Residues 223-279 (VAMNPIDHPHGGGEGRTSGGRHPVTPWGKGTKGTRTRSNKSTDKYILRSRHAKKKGR) are disordered. Residues 269–279 (LRSRHAKKKGR) show a composition bias toward basic residues.

Belongs to the universal ribosomal protein uL2 family. Part of the 50S ribosomal subunit. Forms a bridge to the 30S subunit in the 70S ribosome.

Functionally, one of the primary rRNA binding proteins. Required for association of the 30S and 50S subunits to form the 70S ribosome, for tRNA binding and peptide bond formation. It has been suggested to have peptidyltransferase activity; this is somewhat controversial. Makes several contacts with the 16S rRNA in the 70S ribosome. The chain is Large ribosomal subunit protein uL2 from Paracoccus denitrificans (strain Pd 1222).